Here is an 84-residue protein sequence, read N- to C-terminus: Cell division topological specificity factor (84 aa).

The protein belongs to the MinE family.

Its function is as follows. Prevents the cell division inhibition by proteins MinC and MinD at internal division sites while permitting inhibition at polar sites. This ensures cell division at the proper site by restricting the formation of a division septum at the midpoint of the long axis of the cell. This is Cell division topological specificity factor from Burkholderia ambifaria (strain MC40-6).